Consider the following 227-residue polypeptide: PKHD-type hydroxylase Bamb_4479 (227 aa).

The region spanning 80–179 (QVYPPLFNRY…RVASFFWVQS (100 aa)) is the Fe2OG dioxygenase domain. Residues His98, Asp100, and His160 each coordinate Fe cation. Arg170 contributes to the 2-oxoglutarate binding site.

Fe(2+) is required as a cofactor. Requires L-ascorbate as cofactor.

The polypeptide is PKHD-type hydroxylase Bamb_4479 (Burkholderia ambifaria (strain ATCC BAA-244 / DSM 16087 / CCUG 44356 / LMG 19182 / AMMD) (Burkholderia cepacia (strain AMMD))).